Consider the following 520-residue polypeptide: L-cysteine:1D-myo-inositol 2-amino-2-deoxy-alpha-D-glucopyranoside ligase (520 aa).

Cys48 contacts Zn(2+). Residues 48–51 (CGIT), Thr63, and 86–88 (NVT) contribute to the L-cysteinyl-5'-AMP site. Positions 50–60 (ITPYDSTHLGH) match the 'HIGH' region motif. The 'ERGGDP' region signature appears at 192 to 197 (ERGGDP). Position 232 (Trp232) interacts with L-cysteinyl-5'-AMP. Residue Cys236 coordinates Zn(2+). 254–256 (GED) contacts L-cysteinyl-5'-AMP. Residue His261 coordinates Zn(2+). An L-cysteinyl-5'-AMP-binding site is contributed by Ile288. The 'KMSKS' region motif lies at 294–298 (KMSKS).

This sequence belongs to the class-I aminoacyl-tRNA synthetase family. MshC subfamily. Monomer. Requires Zn(2+) as cofactor.

It carries out the reaction 1D-myo-inositol 2-amino-2-deoxy-alpha-D-glucopyranoside + L-cysteine + ATP = 1D-myo-inositol 2-(L-cysteinylamino)-2-deoxy-alpha-D-glucopyranoside + AMP + diphosphate + H(+). Its function is as follows. Catalyzes the ATP-dependent condensation of GlcN-Ins and L-cysteine to form L-Cys-GlcN-Ins. In Corynebacterium kroppenstedtii (strain DSM 44385 / JCM 11950 / CIP 105744 / CCUG 35717), this protein is L-cysteine:1D-myo-inositol 2-amino-2-deoxy-alpha-D-glucopyranoside ligase.